The primary structure comprises 386 residues: Putative aminotransferase YugH (386 aa).

K234 carries the post-translational modification N6-(pyridoxal phosphate)lysine.

The protein belongs to the class-I pyridoxal-phosphate-dependent aminotransferase family. Pyridoxal 5'-phosphate is required as a cofactor.

The protein localises to the cytoplasm. The protein is Putative aminotransferase YugH (yugH) of Bacillus subtilis (strain 168).